The sequence spans 70 residues: Putative membrane protein insertion efficiency factor (70 aa).

This sequence belongs to the UPF0161 family.

The protein resides in the cell inner membrane. Functionally, could be involved in insertion of integral membrane proteins into the membrane. The sequence is that of Putative membrane protein insertion efficiency factor from Sphingopyxis alaskensis (strain DSM 13593 / LMG 18877 / RB2256) (Sphingomonas alaskensis).